Reading from the N-terminus, the 498-residue chain is Cytochrome P450 monooxygenase idtP (498 aa).

The first 20 residues, 1 to 20, serve as a signal peptide directing secretion; the sequence is MFLLHILAIGACLLWYFVRS. C439 provides a ligand contact to heme.

It belongs to the cytochrome P450 family. Heme is required as a cofactor.

It participates in secondary metabolite biosynthesis. In terms of biological role, cytochrome P450 monooxygenase; part of the gene cluster that mediates the biosynthesis of paspalitrems, indole-diterpene (IDT) mycotoxins that are potent tremorgens in mammals. The geranylgeranyl diphosphate (GGPP) synthase idtG is proposed to catalyze the first step in IDT biosynthesis via catalysis of a series of iterative condensations of isopentenyl diphosphate (IPP) with dimethylallyl diphosphate (DMAPP), geranyl diphosphate (GPP), and farnesyl diphosphate (FPP), to form GGPP. Condensation of indole-3-glycerol phosphate with GGPP by the prenyltransferase idtC then forms 3-geranylgeranylindole (3-GGI). Epoxidation of the two terminal alkenes of the geranylgeranyl moiety by the FAD-dependent monooxygenase idtM, and cyclization by the terpene cyclase idtB then leads to the production of paspaline. The cytochrome P450 monooxygenase idtP then catalyzes oxidative elimination of the pendant methyl group at C-12 of paspaline and generates the C-10 ketone to yield 13-desoxypaxilline. The cytochrome P450 monooxygenase idtQ may catalyze the C-13 oxidation of 13-desoxypaxilline to afford paxilline. Considering that both paspalicine and paxilline were detected in C.paspali, idtQ also catalyzes the formation of paspalinine from 13-desoxypaxilline via paspalicine as an intermediate. Finally, the alpha-prenyltransferase idtF prenylates paspalinine at the C-20 or the C-21 positions to yield paspalitrems A and C, respectively. The hydroxylation of paspalitrem A at C-32 by a still unknown oxidase affords paspalitrem B. In Claviceps paspali (Rye ergot fungus), this protein is Cytochrome P450 monooxygenase idtP.